The following is a 338-amino-acid chain: Ferredoxin--NADP reductase (338 aa).

FAD-binding residues include Thr-14, Asp-33, Gln-41, Tyr-46, Val-86, Phe-120, Asp-284, and Thr-325.

The protein belongs to the ferredoxin--NADP reductase type 2 family. In terms of assembly, homodimer. FAD is required as a cofactor.

The enzyme catalyses 2 reduced [2Fe-2S]-[ferredoxin] + NADP(+) + H(+) = 2 oxidized [2Fe-2S]-[ferredoxin] + NADPH. The chain is Ferredoxin--NADP reductase from Pelagibacter ubique (strain HTCC1062).